The following is a 1064-amino-acid chain: WD repeat-containing protein on Y chromosome (1064 aa).

WD repeat units lie at residues 150–194 (EEVT…IRTA), 317–356 (RIPL…EPSA), 360–399 (GHNG…LLQT), 450–489 (THAA…RKII), 502–541 (IIDI…VVRN), 589–629 (FHTD…RRYS), 742–781 (KTGD…VPAS), and 825–864 (GHLK…LGTL). The interval 1022–1044 (SSLNIKQPTRRRSGKTHDPRNIR) is disordered.

The sequence is that of WD repeat-containing protein on Y chromosome from Drosophila ananassae (Fruit fly).